The sequence spans 522 residues: Target of rapamycin complex 2 subunit MAPKAP1 (522 aa).

N-acetylalanine is present on Ala-2. Positions 2–184 (AFLDNPTIIL…KKIDVYLPLH (183 aa)) are interaction with MAP3K2. Residues 2–267 (AFLDNPTIIL…GFSTLALVEK (266 aa)) form an interaction with NBN region. At Thr-86 the chain carries Phosphothreonine. Phosphoserine occurs at positions 128, 186, 315, and 356. The region spanning 139–267 (QSILSVRLEQ…GFSTLALVEK (129 aa)) is the CRIM domain. Residues 279–353 (LFVRINAAHG…QSAWEFCQVR (75 aa)) form an SIN1-type RBD region. The 106-residue stretch at 382–487 (HYKSFKVSMI…IVLKVNYILE (106 aa)) folds into the SIN1-type PH domain. Arg-393 provides a ligand contact to a 1,2-diacyl-sn-glycero-3-phospho-(1D-myo-inositol-3,4,5-trisphosphate). The residue at position 398 (Thr-398) is a Phosphothreonine. 2 residues coordinate a 1,2-diacyl-sn-glycero-3-phospho-(1D-myo-inositol-3,4,5-trisphosphate): Lys-428 and Lys-464. An interaction with ATF2 region spans residues 468 to 522 (FESDAATVNEIVLKVNYILESRASTARADYFAQKQRKLNRRTSFSFQKEKKSGQQ). A Phosphoserine modification is found at Ser-510.

It belongs to the SIN1 family. As to quaternary structure, component of the mechanistic target of rapamycin complex 2 (mTORC2), consisting in two heterotretramers composed of MTOR, MLST8, RICTOR and MAPKAP1/SIN1. The mTORC2 core complex associates with PRR5/PROTOR1 and/or PRR5L/PROTOR2. Contrary to mTORC1, mTORC2 does not bind to and is not sensitive to FKBP12-rapamycin. Interacts with MAP3K2. Interacts with ATF2. Interacts with MAPK8. Interacts with GTP-bound HRAS and KRAS; inhibiting their activity. Interacts with IFNAR2. Phosphorylation at Ser-128 by PKC promotes relocalization to the perinuclear region, where the mTORC2 complex specifically mediates phosphorylation of SGK1. Phosphorylated at Thr-86 by AKT1 or RPS6KB1 in the presence of growth factors; the effect of this phosphorylation is however unclear. According to two studies, phosphorylation at Thr-86 by AKT1 is part of a positive feedback loop that increases mTORC2 activation. According to another study, phosphorylation at Thr-86 and Thr-398 by RPS6KB1 promotes dissociation from the mTORC2 complex, leading to inhibit mTORC2 signaling.

The protein localises to the cell membrane. It localises to the endoplasmic reticulum membrane. It is found in the early endosome membrane. The protein resides in the late endosome membrane. Its subcellular location is the lysosome membrane. The protein localises to the golgi apparatus membrane. It localises to the mitochondrion outer membrane. It is found in the cytoplasm. The protein resides in the perinuclear region. Its subcellular location is the nucleus. Its activity is regulated as follows. Phosphatidylinositol 3,4,5-trisphosphate (PI(3,4,5)P3) promotes MTOR activation by relieving MAPKAP1/SIN1-mediated inhibition of MTOR that takes place in absence of PI(3,4,5)P3. Its function is as follows. Component of the mechanistic target of rapamycin complex 2 (mTORC2), which transduces signals from growth factors to pathways involved in proliferation, cytoskeletal organization, lipogenesis and anabolic output. In response to growth factors, mTORC2 phosphorylates and activates AGC protein kinase family members, including AKT (AKT1, AKT2 and AKT3), PKC (PRKCA, PRKCB and PRKCE) and SGK1. In contrast to mTORC1, mTORC2 is nutrient-insensitive. Within the mTORC2 complex, MAPKAP1/SIN1 acts as a substrate adapter which recognizes and binds AGC protein kinase family members for phosphorylation by MTOR. mTORC2 plays a critical role in AKT1 activation by mediating phosphorylation of different sites depending on the context, such as 'Thr-450', 'Ser-473', 'Ser-477' or 'Thr-479', facilitating the phosphorylation of the activation loop of AKT1 on 'Thr-308' by PDPK1/PDK1 which is a prerequisite for full activation. mTORC2 catalyzes the phosphorylation of SGK1 at 'Ser-422' and of PRKCA on 'Ser-657'. The mTORC2 complex also phosphorylates various proteins involved in insulin signaling, such as FBXW8 and IGF2BP1. mTORC2 acts upstream of Rho GTPases to regulate the actin cytoskeleton, probably by activating one or more Rho-type guanine nucleotide exchange factors. mTORC2 promotes the serum-induced formation of stress-fibers or F-actin. MAPKAP1 inhibits MAP3K2 by preventing its dimerization and autophosphorylation. Inhibits HRAS and KRAS independently of mTORC2 complex. Enhances osmotic stress-induced phosphorylation of ATF2 and ATF2-mediated transcription. Involved in ciliogenesis, regulates cilia length through its interaction with CCDC28B independently of mTORC2 complex. The chain is Target of rapamycin complex 2 subunit MAPKAP1 (MAPKAP1) from Pongo abelii (Sumatran orangutan).